The primary structure comprises 142 residues: Putative pre-16S rRNA nuclease (142 aa).

The protein belongs to the YqgF nuclease family.

The protein localises to the cytoplasm. Its function is as follows. Could be a nuclease involved in processing of the 5'-end of pre-16S rRNA. In Shouchella clausii (strain KSM-K16) (Alkalihalobacillus clausii), this protein is Putative pre-16S rRNA nuclease.